Reading from the N-terminus, the 518-residue chain is Calcium/calmodulin-dependent protein kinase kinase cmkC (518 aa).

A disordered region spans residues 1–72 (MANEGAGSLQ…SEYTLSQDDG (72 aa)). Polar residues-rich tracts occupy residues 8 to 17 (SLQQDASPGS) and 60 to 71 (NARSEYTLSQDD). The Protein kinase domain maps to 81–376 (YVIKQEIGRG…MDELREHPWV (296 aa)). ATP is bound by residues 87 to 95 (IGRGSFGAV) and lysine 109. Residues 119 to 149 (RAKSQLLRQSRGPKRSSRWPKLPFSSPGTGT) form a disordered region. Aspartate 243 serves as the catalytic Proton acceptor. Residues 404 to 409 (FSAITK) are autoinhibitory domain. A calmodulin-binding region spans residues 407-431 (ITKNFGHVLAVMKAAKKFKSLQGPT). The segment at 453–472 (PTQMDPEESVSLPSPLPYKK) is disordered.

Belongs to the protein kinase superfamily. Ser/Thr protein kinase family.

It carries out the reaction L-seryl-[protein] + ATP = O-phospho-L-seryl-[protein] + ADP + H(+). It catalyses the reaction L-threonyl-[protein] + ATP = O-phospho-L-threonyl-[protein] + ADP + H(+). Activated by Ca(2+)/calmodulin. Binding of calmodulin may relieve intrasteric autoinhibition. Its function is as follows. Calcium/calmodulin-dependent protein kinase that operates in the calcium-triggered CaMKK-CaMK1 signaling cascade. Phosphorylates and activates cmkB in vitro. Required in G1-phase of the cell cycle for proper timing of the initial nuclear division after germination as well as for subsequent nuclear division cycles. Required for the normal temporal regulation of nimX activity. The polypeptide is Calcium/calmodulin-dependent protein kinase kinase cmkC (Emericella nidulans (Aspergillus nidulans)).